The primary structure comprises 160 residues: Small ribosomal subunit protein uS7 (160 aa).

The protein belongs to the universal ribosomal protein uS7 family. As to quaternary structure, part of the 30S ribosomal subunit. Contacts proteins S9 and S11.

In terms of biological role, one of the primary rRNA binding proteins, it binds directly to 16S rRNA where it nucleates assembly of the head domain of the 30S subunit. Is located at the subunit interface close to the decoding center, probably blocks exit of the E-site tRNA. The chain is Small ribosomal subunit protein uS7 from Ehrlichia chaffeensis (strain ATCC CRL-10679 / Arkansas).